The primary structure comprises 100 residues: MISQERFLKVLLSPHISEKSSISMEKFNTVVLKVSRNTTKNEIKFAVQNLFNIQVESVKTVYVKGKKKRQSNRIIYRSDWKKAYIKVKKGQNLDFMSNIE.

This sequence belongs to the universal ribosomal protein uL23 family. In terms of assembly, part of the 50S ribosomal subunit. Contacts protein L29, and trigger factor when it is bound to the ribosome.

Functionally, one of the early assembly proteins it binds 23S rRNA. One of the proteins that surrounds the polypeptide exit tunnel on the outside of the ribosome. Forms the main docking site for trigger factor binding to the ribosome. The protein is Large ribosomal subunit protein uL23 of Buchnera aphidicola subsp. Schizaphis graminum (strain Sg).